Consider the following 73-residue polypeptide: DNA-directed RNA polymerase subunit omega (73 aa).

The protein belongs to the RNA polymerase subunit omega family. The RNAP catalytic core consists of 2 alpha, 1 beta, 1 beta' and 1 omega subunit. When a sigma factor is associated with the core the holoenzyme is formed, which can initiate transcription.

The catalysed reaction is RNA(n) + a ribonucleoside 5'-triphosphate = RNA(n+1) + diphosphate. Promotes RNA polymerase assembly. Latches the N- and C-terminal regions of the beta' subunit thereby facilitating its interaction with the beta and alpha subunits. This chain is DNA-directed RNA polymerase subunit omega, found in Lactobacillus delbrueckii subsp. bulgaricus (strain ATCC BAA-365 / Lb-18).